Reading from the N-terminus, the 423-residue chain is Adenylosuccinate synthetase (423 aa).

GTP contacts are provided by residues 12-18 and 40-42; these read GDEGKGK and GHT. The active-site Proton acceptor is Asp13. Residues Asp13 and Gly40 each contribute to the Mg(2+) site. IMP contacts are provided by residues 13 to 16, 38 to 41, Thr129, Arg143, Gln221, Thr236, and Arg300; these read DEGK and NAGH. The active-site Proton donor is His41. 296–302 lines the substrate pocket; the sequence is SVTGRKR. GTP-binding positions include Arg302 and 408-410; that span reads SVG.

It belongs to the adenylosuccinate synthetase family. As to quaternary structure, homodimer. Mg(2+) serves as cofactor.

Its subcellular location is the cytoplasm. The catalysed reaction is IMP + L-aspartate + GTP = N(6)-(1,2-dicarboxyethyl)-AMP + GDP + phosphate + 2 H(+). It functions in the pathway purine metabolism; AMP biosynthesis via de novo pathway; AMP from IMP: step 1/2. Its function is as follows. Plays an important role in the de novo pathway of purine nucleotide biosynthesis. Catalyzes the first committed step in the biosynthesis of AMP from IMP. The protein is Adenylosuccinate synthetase of Bacteroides thetaiotaomicron (strain ATCC 29148 / DSM 2079 / JCM 5827 / CCUG 10774 / NCTC 10582 / VPI-5482 / E50).